The chain runs to 153 residues: Small ribosomal subunit protein uS13 (153 aa).

This sequence belongs to the universal ribosomal protein uS13 family. As to quaternary structure, part of the 30S ribosomal subunit. Forms a loose heterodimer with protein S19. Forms two bridges to the 50S subunit in the 70S ribosome.

Functionally, located at the top of the head of the 30S subunit, it contacts several helices of the 16S rRNA. In the 70S ribosome it contacts the 23S rRNA (bridge B1a) and protein L5 of the 50S subunit (bridge B1b), connecting the 2 subunits; these bridges are implicated in subunit movement. The polypeptide is Small ribosomal subunit protein uS13 (Pyrobaculum islandicum (strain DSM 4184 / JCM 9189 / GEO3)).